The following is an 843-amino-acid chain: Alpha-L-fucosidase 2 (843 aa).

An N-terminal signal peptide occupies residues 1–27 (MAEKSSFFVHFSCLLLLLTIIITCGEG). Asparagine 62, asparagine 253, asparagine 365, and asparagine 605 each carry an N-linked (GlcNAc...) asparagine glycan.

This sequence belongs to the glycosyl hydrolase 95 family. Ubiquitous. Highest expression in vascular tissues, leaf trichomes, root elongation zone and emerging lateral roots.

It localises to the secreted. It is found in the extracellular space. Its subcellular location is the apoplast. It carries out the reaction an alpha-L-fucoside + H2O = L-fucose + an alcohol. Hydrolyzes alpha-1,2-linked fucose. Also active on fucosylated xyloglucan oligosaccharides. No activity with 3-fucosyllactose, p-nitrophenyl-alpha-I-fucopyranoside, lacto-N-fucopentaose II, lacto-N-fucopentaose III or alpha 1,6-fucosylated chitopentaose. Involved in apoplastic xyloglucan metabolism. The sequence is that of Alpha-L-fucosidase 2 (FUC95A) from Arabidopsis thaliana (Mouse-ear cress).